A 525-amino-acid chain; its full sequence is Light-independent protochlorophyllide reductase subunit B (525 aa).

A [4Fe-4S] cluster-binding site is contributed by Asp-36. The active-site Proton donor is Asp-292. Substrate is bound at residue 428–429; sequence GL. Residues 447-470 form a disordered region; it reads PSASSENGSAPLSAGTATPAAAPE. Residues 460–470 are compositionally biased toward low complexity; it reads AGTATPAAAPE.

This sequence belongs to the ChlB/BchB/BchZ family. In terms of assembly, protochlorophyllide reductase is composed of three subunits; BchL, BchN and BchB. Forms a heterotetramer of two BchB and two BchN subunits. It depends on [4Fe-4S] cluster as a cofactor.

It carries out the reaction chlorophyllide a + oxidized 2[4Fe-4S]-[ferredoxin] + 2 ADP + 2 phosphate = protochlorophyllide a + reduced 2[4Fe-4S]-[ferredoxin] + 2 ATP + 2 H2O. The protein operates within porphyrin-containing compound metabolism; bacteriochlorophyll biosynthesis (light-independent). In terms of biological role, component of the dark-operative protochlorophyllide reductase (DPOR) that uses Mg-ATP and reduced ferredoxin to reduce ring D of protochlorophyllide (Pchlide) to form chlorophyllide a (Chlide). This reaction is light-independent. The NB-protein (BchN-BchB) is the catalytic component of the complex. This chain is Light-independent protochlorophyllide reductase subunit B, found in Chlorobium luteolum (strain DSM 273 / BCRC 81028 / 2530) (Pelodictyon luteolum).